The chain runs to 930 residues: Isoleucine--tRNA ligase (930 aa).

Residues proline 57–histidine 67 carry the 'HIGH' region motif. Glutamate 554 is a binding site for L-isoleucyl-5'-AMP. The short motif at lysine 595–serine 599 is the 'KMSKS' region element. Lysine 598 is an ATP binding site. Zn(2+) is bound by residues cysteine 888, cysteine 891, cysteine 908, and cysteine 911.

It belongs to the class-I aminoacyl-tRNA synthetase family. IleS type 1 subfamily. In terms of assembly, monomer. It depends on Zn(2+) as a cofactor.

It localises to the cytoplasm. The catalysed reaction is tRNA(Ile) + L-isoleucine + ATP = L-isoleucyl-tRNA(Ile) + AMP + diphosphate. Functionally, catalyzes the attachment of isoleucine to tRNA(Ile). As IleRS can inadvertently accommodate and process structurally similar amino acids such as valine, to avoid such errors it has two additional distinct tRNA(Ile)-dependent editing activities. One activity is designated as 'pretransfer' editing and involves the hydrolysis of activated Val-AMP. The other activity is designated 'posttransfer' editing and involves deacylation of mischarged Val-tRNA(Ile). This is Isoleucine--tRNA ligase from Streptococcus pneumoniae (strain P1031).